The primary structure comprises 128 residues: Fluoride-specific ion channel FluC (128 aa).

4 consecutive transmembrane segments (helical) span residues 2–22, 37–57, 65–85, and 101–121; these read LTFA…GAWL, WGTL…VALI, AWIR…FSTF, and AAAY…LGLA. Na(+) is bound by residues G77 and T80.

The protein belongs to the fluoride channel Fluc/FEX (TC 1.A.43) family.

The protein localises to the cell inner membrane. It carries out the reaction fluoride(in) = fluoride(out). With respect to regulation, na(+) is not transported, but it plays an essential structural role and its presence is essential for fluoride channel function. Its function is as follows. Fluoride-specific ion channel. Important for reducing fluoride concentration in the cell, thus reducing its toxicity. The chain is Fluoride-specific ion channel FluC from Bordetella bronchiseptica (strain ATCC BAA-588 / NCTC 13252 / RB50) (Alcaligenes bronchisepticus).